The following is a 118-amino-acid chain: Late cornified envelope protein 1B (118 aa).

Positions 87 to 118 (CHRPQSSGCCSQPSGGSSCCGGGSGQHSGGCC) are disordered. Positions 90-103 (PQSSGCCSQPSGGS) are enriched in low complexity. Positions 104–118 (SCCGGGSGQHSGGCC) are enriched in gly residues.

Belongs to the LCE family. In terms of assembly, interacts with CYSRT1; the interaction is direct. As to expression, skin-specific. Expression was readily detected in adult trunk skin, adult arm skin, fetal skin, penal skin, vulva, esophagus and tongue. Not expressed in the cervix, rectum, lung, colon, or placenta.

In terms of biological role, precursors of the cornified envelope of the stratum corneum. This is Late cornified envelope protein 1B (LCE1B) from Homo sapiens (Human).